Here is a 310-residue protein sequence, read N- to C-terminus: p-hydroxybenzoic acid efflux pump subunit AaeA (310 aa).

A helical transmembrane segment spans residues 12–32 (AITLVLVILAFIAIFRAWVYY).

It belongs to the membrane fusion protein (MFP) (TC 8.A.1) family.

It localises to the cell inner membrane. In terms of biological role, forms an efflux pump with AaeB. The polypeptide is p-hydroxybenzoic acid efflux pump subunit AaeA (Salmonella heidelberg (strain SL476)).